Consider the following 92-residue polypeptide: YcgL domain-containing protein Sfri_1738 (92 aa).

Residues 1–85 (MICAVYKSGR…PQINLLEQHK (85 aa)) enclose the YcgL domain.

In Shewanella frigidimarina (strain NCIMB 400), this protein is YcgL domain-containing protein Sfri_1738.